Consider the following 795-residue polypeptide: Phospholipase A-2-activating protein (795 aa).

7 WD repeats span residues 17-56 (HELD…RGFT), 63-107 (GHSN…PLYI), 110-148 (GHKD…MTLQ), 149-188 (GHTA…RTFS), 190-227 (HEDC…LGVY), 229-268 (GHTN…QTIR), and 270-307 (PAQS…TASA). Ser-50 carries the phosphoserine modification. Residues 366 to 465 (QWSVSDGRWI…KGQTLGLGNT (100 aa)) enclose the PFU domain. N6-acetyllysine is present on Lys-529. In terms of domain architecture, PUL spans 533-794 (IYFPKKEALT…SECCRLILNL (262 aa)). 6 ARM repeats span residues 546-588 (ANPT…GNAS), 589-620 (EKPT…LRLS), 621-669 (IKHP…CFVS), 670-715 (QAGQ…CFHK), 716-755 (DHNI…LISD), and 756-795 (DSNA…LNLL).

The protein belongs to the WD repeat PLAP family. Interacts with ubiquitin. Interacts with UBXN6, VCP and YOD1; may form a complex involved in macroautophagy.

Its subcellular location is the nucleus. The protein localises to the cytoplasm. It localises to the synapse. Functionally, plays a role in protein ubiquitination, sorting and degradation through its association with VCP. Involved in ubiquitin-mediated membrane proteins trafficking to late endosomes in an ESCRT-dependent manner, and hence plays a role in synaptic vesicle recycling. May play a role in macroautophagy, regulating for instance the clearance of damaged lysosomes. Plays a role in cerebellar Purkinje cell development. Positively regulates cytosolic and calcium-independent phospholipase A2 activities in a tumor necrosis factor alpha (TNF-alpha)- or lipopolysaccharide (LPS)-dependent manner, and hence prostaglandin E2 biosynthesis. The sequence is that of Phospholipase A-2-activating protein (Plaa) from Rattus norvegicus (Rat).